Here is a 301-residue protein sequence, read N- to C-terminus: Olfactory receptor 10AG1 (301 aa).

At Met-1–Trp-16 the chain is on the extracellular side. The chain crosses the membrane as a helical span at residues Met-17–Ile-37. Topologically, residues Leu-38–Ala-45 are cytoplasmic. A helical membrane pass occupies residues Leu-46–Thr-66. Topologically, residues Ile-67–Thr-90 are extracellular. N-linked (GlcNAc...) asparagine glycosylation is present at Asn-82. A disulfide bridge connects residues Cys-88 and Cys-180. Residues Gln-91–Tyr-111 form a helical membrane-spanning segment. Topologically, residues Asp-112–Lys-130 are cytoplasmic. A helical transmembrane segment spans residues Val-131 to Thr-151. The Extracellular portion of the chain corresponds to Cys-152 to Ile-188. The helical transmembrane segment at Thr-189–Ser-208 threads the bilayer. The Cytoplasmic portion of the chain corresponds to Tyr-209–Ala-228. The chain crosses the membrane as a helical span at residues Phe-229–Thr-249. Over Tyr-250 to Gly-262 the chain is Extracellular. A helical transmembrane segment spans residues Lys-263–Leu-283. Residues Arg-284 to Thr-301 lie on the Cytoplasmic side of the membrane.

The protein belongs to the G-protein coupled receptor 1 family.

Its subcellular location is the cell membrane. In terms of biological role, odorant receptor. This is Olfactory receptor 10AG1 (OR10AG1) from Homo sapiens (Human).